We begin with the raw amino-acid sequence, 443 residues long: Amino-acid acetyltransferase (443 aa).

One can recognise an N-acetyltransferase domain in the interval 296-436 (EQIRRATIND…KMYNYQRRSK (141 aa)).

The protein belongs to the acetyltransferase family. ArgA subfamily. In terms of assembly, homohexamer.

The protein resides in the cytoplasm. It carries out the reaction L-glutamate + acetyl-CoA = N-acetyl-L-glutamate + CoA + H(+). The protein operates within amino-acid biosynthesis; L-arginine biosynthesis; N(2)-acetyl-L-ornithine from L-glutamate: step 1/4. The sequence is that of Amino-acid acetyltransferase from Salmonella arizonae (strain ATCC BAA-731 / CDC346-86 / RSK2980).